Reading from the N-terminus, the 91-residue chain is Non-specific lipid-transfer protein 1 (91 aa).

4 disulfide bridges follow: Cys-3–Cys-50, Cys-13–Cys-27, Cys-28–Cys-73, and Cys-48–Cys-87. A 1,2-diacyl-sn-glycero-3-phosphocholine contacts are provided by Arg-44 and Tyr-79.

In terms of assembly, monomer.

Functionally, plant non-specific lipid-transfer proteins transfer phospholipids as well as galactolipids across membranes. May play a role in wax or cutin deposition in the cell walls of expanding epidermal cells and certain secretory tissues. Has antifungal activity against F.solani, F.oxysporum, P.aphanidermatum and S.rolfsii. Has antibacterial activity against the Gram-positive bacterium S.aureus but not against the Gram-negative bacterium S.typhimurium. The chain is Non-specific lipid-transfer protein 1 from Vigna radiata var. radiata (Mung bean).